Consider the following 540-residue polypeptide: Mitochondrial antiviral-signaling protein (540 aa).

The residue at position 2 (Pro2) is an N-acetylproline. The Cytoplasmic portion of the chain corresponds to 2-513; that stretch reads PFAEDKTYKY…REVPCHRPSP (512 aa). Residues Lys7 and Lys10 each participate in a glycyl lysine isopeptide (Lys-Gly) (interchain with G-Cter in ubiquitin) cross-link. Positions 10–77 constitute a CARD domain; it reads KYICRNFSNF…WVEYFIAALR (68 aa). Positions 10–77 are required for interaction with NLRX1; the sequence is KYICRNFSNF…WVEYFIAALR (68 aa). Cys79 carries S-palmitoyl cysteine lipidation. The segment at 95 to 297 is disordered; sequence YQPRTSDRPP…EAPANSLPSK (203 aa). Over residues 106 to 122 the composition is skewed to pro residues; sequence PLEPPSLPAERPGPPTP. The interval 143–147 is interaction with TRAF2; sequence PVQET. Polar residues-rich tracts occupy residues 145-165 and 179-216; these read QETQAPESPGENSEQALQTLS and ESSSDLAALSPLTSSGHQEQDTELGSTHTAGATSSLTP. 5 positions are modified to phosphoserine: Ser152, Ser157, Ser165, Ser180, and Ser188. Residues 153-158 are interaction with TRAF6; it reads PGENSE. Thr215 is modified (phosphothreonine). Ser222 and Ser233 each carry phosphoserine. Residue Thr234 is modified to Phosphothreonine. The residue at position 236 (Arg236) is an Asymmetric dimethylarginine. The span at 241 to 266 shows a compositional bias: low complexity; sequence PGPTGSVVSTGTSFSSSSPGLASAGA. Residues Ser253 and Ser258 each carry the phosphoserine modification. Glycyl lysine isopeptide (Lys-Gly) (interchain with G-Cter in ubiquitin) cross-links involve residues Lys311 and Lys325. Disordered regions lie at residues 314–358 and 373–419; these read ANPA…RAGM and SAST…SELS. Polar residues-rich tracts occupy residues 317 to 331, 339 to 355, and 373 to 382; these read ASVSTVPSKLPTSSK, NALTNPAPSKLPINSTR, and SASTVPTDGS. Over residues 388-403 the composition is skewed to low complexity; the sequence is TPAAPTPAGATGGSSA. Ser408 carries the phosphoserine modification. The pLxIS motif motif lies at 439-442; that stretch reads LAIS. Ser442 carries the post-translational modification Phosphoserine; by TBK1. The segment at 455-460 is interaction with TRAF6; the sequence is PEENEY. Glycyl lysine isopeptide (Lys-Gly) (interchain with G-Cter in ubiquitin) cross-links involve residues Lys461 and Lys500. Lys461 participates in a covalent cross-link: (Microbial infection) Glycyl lysine isopeptide (Lys-Gly) (interchain with G-Cter in UFM1). A disordered region spans residues 476-507; it reads IQLLEGNPGPPADPDGGPRPQADRKFQEREVP. The segment covering 496–507 has biased composition (basic and acidic residues); it reads QADRKFQEREVP. Residues 514-534 form a helical membrane-spanning segment; the sequence is GALWLQVAVTGVLVVTLLVVL. The Mitochondrial intermembrane segment spans residues 535-540; the sequence is YRRRLH.

In terms of assembly, self-associates and polymerizes (via CARD domains) to form 400 nM long three-stranded helical filaments on mitochondria, filament nucleation requires interaction with RIGI whose CARD domains act as a template for filament assembly. Interacts with RIGI, IFIH1/MDA5, TRAF2, TRAF6 and C1QBP. May interact with FADD, RIPK1, CHUK and IKBKB. Interacts (when phosphorylated) with IRF3; following activation and phosphorylation on the pLxIS motif by TBK1, recruits IRF3. Interacts with NLRX1. Interaction with NLRX1 requires the CARD domain. Interacts with PSMA7. Interacts with TRAFD1. Interacts (via C-terminus) with PCBP2 in a complex containing MAVS/IPS1, PCBP2 and ITCH. Interacts with CYLD. Interacts with SRC. Interacts with DHX58/LGP2 and IKBKE. Interacts with STING1. Interacts with IFIT3 (via N-terminus). Interacts with TBK1 only in the presence of IFIT3. Interacts with TTLL12; the interaction prevents MAVS binding to TBK1 and IKBKE. Interacts with MUL1. Interacts with ANKRD17. Interacts with NDFIP1. Interacts with SMURF1; the interaction is mediated by NDFIP1 and leads to MAVS ubiquitination and degradation. Interacts with UBXN1; this interaction inhibits MAVS-mediated antiviral pathway. Interacts (via C-terminus) with GPATCH3; the interaction is markedly increased upon viral infection. Directly interacts (via CARD domain) with ATG5 and ATG12, either as ATG5 and ATG12 monomers or as ATG12-ATG5 conjugates. Interacts with DHX33 (via the helicase C-terminal domain). Interacts with DDX3X (via C-terminus); this interaction occurs rapidly, but transiently after Sendai virus infection. The interaction with DDX3X potentiates MAVS-mediated IFNB induction. Conversely inhibition of this interaction, for instance by HCV core protein, prevents MAVS-mediated IFNB induction. Transiently interacts with TRAF3 early during Sendai virus infection. Interacts with CLPB; the interaction is enhanced by Sendai virus infection. Interacts with TRAF3IP3. Interacts with TOMM70; the interaction is enhanced by Sendai virus infection. Interacts with ZNFX1. Interacts with N4BP3; this interaction promotes the polyubiquitination of MAVS. Interacts with TAX1BP1; this interaction induces MAVS polyubiquitination. Interacts with NLRP3; promoting NLRP3 recruitment to mitochondria and activation of the NLRP3 inflammasome. Interacts with ECSIT; this interaction bridges RIGI to the MAVS complex at the mitochondrion. Interacts with UBL7; this interaction promotes MAVS 'Lys-27'-linked ubiquitination leading to type I interferon production. Interacts (via transmembrane domain) with SMIM30/MAVI1 (via transmembrane domain); the interaction disrupts MAVS interaction with RIGI and inhibits MAVS aggregation, resulting in the repression of type I interferon signaling and innate immune responses. (Microbial infection) Interacts with hepatitis C virus (HCV) NS3/4A protease; this interaction leads to MAVS cleavage, thereby preventing the establishment of an antiviral state. As to quaternary structure, (Microbial infection) Interacts with hepatitis GB virus B NS3/4A protease; this interaction leads to MAVS cleavage. In terms of assembly, (Microbial infection) Interacts with human respiratory syncytial virus/HRSV protein NS1; this interaction disrupts MAVS binding to RIGI. (Microbial infection) Interacts with Andes virus Nnon-structural protein NS-S; this interaction may reduce MAVS ubiquitination and leads to inhibition of MAVS-induced type-I IFN signaling pathway. As to quaternary structure, (Microbial infection) Interacts with Seneca Valley virus protease 3C; this interaction allows the cleavage of MAVS and subsequent suppression of host innate immunity. In terms of assembly, (Microbial infection) Interacts with SARS-CoV virus protein ORF9b; this interaction mediates MAVS proteasomal degradation. (Microbial infection) Interacts with SARS-CoV-2 virus protein M; this interaction impairs MAVS self-association and its recruitment of downstream components. As to quaternary structure, (Microbial infection) Interacts with foot-and-mouth disease virus protein VP1; this interaction competes with TRAF3 interaction to MAVS leading to suppression of host innate immunity. In terms of assembly, (Microbial infection) Interacts with Epstein-Barr virus protein BILF1; this interaction mediates MAVS routing from mitochondria to lysosomes. Post-translationally, following activation, phosphorylated by TBK1 at Ser-442 in the pLxIS motif. The phosphorylated pLxIS motif constitutes an IRF3-binding motif, leading to recruitment of the transcription factor IRF3 to induce type-I interferons and other cytokines. In terms of processing, ubiquitinated. Undergoes 'Lys-48'-linked polyubiquitination catalyzed by ITCH; ITCH-dependent polyubiquitination is mediated by the interaction with PCBP2 and leads to MAVS/IPS1 proteasomal degradation. Ubiquitinated by RNF125, leading to its degradation by the proteasome. Undergoes 'Lys-48'-linked ubiquitination catalyzed by SMURF1. Undergoes 'Lys-48'-linked ubiquitination catalyzed by MARCHF5 at Lys-7 and Lys-500, leading to proteasomal degradation. Ubiquitinated via 'Lys-63'-linked ubiquitination at Lys-10, Lys-311 and Lys-461 by UBE2N and TRIM31, promoting MAVS polymerization and formation of three-stranded helical filaments on mitochondria. Undergoes 'Lys-63'-linked ubiquitination leading to enhanced interaction between MAVS and TRAF2. Undergoes 'Lys-27'-linked ubiquitination by TRIM21 leading to enhanced interaction between MAVS and TBK1. Deubiquitinated by USP10 leading to attenuation of RIGI-mediated MAVS aggregation and production of type I interferon. Undergoes 'Lys-48'-linked polyubiquitination catalyzed by RNF115 leading to its degradation. Palmitoylated by ZHDDC4. Palmitoylation promotes MAVS stabilization and activation by inhibiting 'Lys-48'- but facilitating 'Lys-63'-linked ubiquitination. Post-translationally, proteolytically cleaved by apoptotic caspases during apoptosis, leading to its inactivation. Cleavage by CASP3 during virus-induced apoptosis inactivates it, preventing cytokine overproduction. In terms of processing, (Microbial infection) Cleaved and degraded by hepatitis A virus (HAV) protein 3ABC allowing the virus to disrupt the activation of host IRF3 through the MDA5 pathway. (Microbial infection) Cleaved by the protease 2A of coxsackievirus B3, poliovirus and enterovirus 71 allowing the virus to disrupt the host type I interferon production. Post-translationally, (Microbial infection) Cleaved by Seneca Valley virus protease 3C allowing the virus to suppress interferon type-I production. In terms of processing, (Microbial infection) Cleaved by HCV protease NS3/4A, thereby preventing the establishment of an antiviral state. (Microbial infection) UFMylated by ULF1 in association with Epstein-Barr virus BILF1; leading to MAVS routing to the lysosome. As to expression, present in T-cells, monocytes, epithelial cells and hepatocytes (at protein level). Ubiquitously expressed, with highest levels in heart, skeletal muscle, liver, placenta and peripheral blood leukocytes.

It is found in the mitochondrion outer membrane. The protein resides in the mitochondrion. Its subcellular location is the peroxisome. Functionally, adapter required for innate immune defense against viruses. Acts downstream of DHX33, RIGI and IFIH1/MDA5, which detect intracellular dsRNA produced during viral replication, to coordinate pathways leading to the activation of NF-kappa-B, IRF3 and IRF7, and to the subsequent induction of antiviral cytokines such as IFNB and RANTES (CCL5). Peroxisomal and mitochondrial MAVS act sequentially to create an antiviral cellular state. Upon viral infection, peroxisomal MAVS induces the rapid interferon-independent expression of defense factors that provide short-term protection, whereas mitochondrial MAVS activates an interferon-dependent signaling pathway with delayed kinetics, which amplifies and stabilizes the antiviral response. May activate the same pathways following detection of extracellular dsRNA by TLR3. May protect cells from apoptosis. Involved in NLRP3 inflammasome activation by mediating NLRP3 recruitment to mitochondria. This is Mitochondrial antiviral-signaling protein from Homo sapiens (Human).